The primary structure comprises 51 residues: Large ribosomal subunit protein eL39 (51 aa).

Belongs to the eukaryotic ribosomal protein eL39 family.

The chain is Large ribosomal subunit protein eL39 from Methanosarcina barkeri (strain Fusaro / DSM 804).